Here is a 179-residue protein sequence, read N- to C-terminus: Putative ankyrin repeat protein RF_0922 (179 aa).

5 ANK repeats span residues 5–34 (KGCT…EQAI), 40–72 (NGST…INHV), 75–104 (NGNT…SQAI), 110–139 (NGDT…EQAI), and 145–174 (NGNT…KQAI).

In Rickettsia felis (strain ATCC VR-1525 / URRWXCal2) (Rickettsia azadi), this protein is Putative ankyrin repeat protein RF_0922.